A 148-amino-acid polypeptide reads, in one-letter code: Protein NrdI (148 aa).

It belongs to the NrdI family.

In terms of biological role, probably involved in ribonucleotide reductase function. The chain is Protein NrdI from Corynebacterium glutamicum (strain R).